Reading from the N-terminus, the 418-residue chain is FXa-directed anticoagulant (418 aa).

An N-terminal signal peptide occupies residues 1 to 19 (MNLKIAIIVICQLVYFTQG). 3 N-linked (GlcNAc...) asparagine glycosylation sites follow: asparagine 117, asparagine 167, and asparagine 286.

The protein belongs to the serpin family. Interacts with host coagulation factor X/F10 (activated). Female salivary gland (at protein level).

It is found in the secreted. Its function is as follows. Anticoagulant and antithrombotic serpin-type protein inhibiting host coagulation factor Xa (F10). Does not inhibit host uPA/urokinase-type plasminogen activator (PLAU), kallikrein, granzyme B (GZMB), matriptase, elastase, alpha-chymotrypsin, chymase, coagulation factor XIIa (F12), coagulation factor XIa (F11), plasmin (PLG), thrombin (F2), trypsin and cathepsin G (CTSG). Inhibits factor Xa-induced production of pro-inflammatory cytokines, such as MCP-1/CCL2, TNF-alpha/TNF, IL-1beta/IL1B, IL6, IL8/CXCL8 and IL18, in human endothelial cells. Inhibits factor Xa-induced up-regulation of protease-activated receptors (PARs) F2R, F2RL1 and F2RL2 in human endothelial cells. Prevents activation of host F2RL1 via inhibition of F2RL1 cleavage by host factor Xa. Inhibits factor Xa-induced up-regulation of adhesion molecules ICAM1 and VCAM1 in human endothelial cells. Inhibits factor Xa-induced up-regulation of phosphorylated ERK1/2 in human endothelial cells. Inhibits factor Xa-induced activation of transcription factor NF-kappa-B in human endothelial cells. Reduces factor Xa-induced edema in the host. Reduces factor Xa-induced endothelial permeability in the host. This is FXa-directed anticoagulant from Aedes albopictus (Asian tiger mosquito).